A 307-amino-acid chain; its full sequence is UDP-3-O-acyl-N-acetylglucosamine deacetylase (307 aa).

Zn(2+)-binding residues include histidine 78, histidine 241, and aspartate 245. Histidine 268 (proton donor) is an active-site residue.

It belongs to the LpxC family. It depends on Zn(2+) as a cofactor.

The enzyme catalyses a UDP-3-O-[(3R)-3-hydroxyacyl]-N-acetyl-alpha-D-glucosamine + H2O = a UDP-3-O-[(3R)-3-hydroxyacyl]-alpha-D-glucosamine + acetate. The protein operates within glycolipid biosynthesis; lipid IV(A) biosynthesis; lipid IV(A) from (3R)-3-hydroxytetradecanoyl-[acyl-carrier-protein] and UDP-N-acetyl-alpha-D-glucosamine: step 2/6. Its function is as follows. Catalyzes the hydrolysis of UDP-3-O-myristoyl-N-acetylglucosamine to form UDP-3-O-myristoylglucosamine and acetate, the committed step in lipid A biosynthesis. The polypeptide is UDP-3-O-acyl-N-acetylglucosamine deacetylase (Delftia acidovorans (strain DSM 14801 / SPH-1)).